The primary structure comprises 420 residues: DNA repair protein NreA (420 aa).

A PIP motif motif is present at residues glutamine 413–alanine 420.

This sequence belongs to the Nre family. In terms of assembly, interacts with the DNA polymerase sliding clamp (PCNA) via the PIP (PCNA-interacting peptide) motif.

Involved in DNA damage repair. Works together with the UvrABC proteins in repairing DNA damage resulting from exposure to the DNA damaging agent mitomycin C (MMC). In Haloferax volcanii (strain ATCC 29605 / DSM 3757 / JCM 8879 / NBRC 14742 / NCIMB 2012 / VKM B-1768 / DS2) (Halobacterium volcanii), this protein is DNA repair protein NreA.